We begin with the raw amino-acid sequence, 163 residues long: GPI-anchored protein LLG2 (163 aa).

An N-terminal signal peptide occupies residues 1-23 (MEISPYCLLSLLPIFLLSGFSLS). An N-linked (GlcNAc...) asparagine glycan is attached at Asn52. Ser135 is lipidated: GPI-anchor amidated serine. Positions 136–163 (DSIPRASTTASLAVLSTFLVLCLLFLSS) are cleaved as a propeptide — removed in mature form.

As to expression, expressed in pollen, pollen tubes, sporophytic pistil tissues, in the early stages of female gametophyte development, and in unfertilized, mature ovules.

The protein localises to the cell membrane. This chain is GPI-anchored protein LLG2, found in Arabidopsis thaliana (Mouse-ear cress).